The sequence spans 211 residues: MTKVLYITAHPHDDTQSYSMAVGKAFIETYKQVHPDHEVIHLDLYKEYIPEIDVDVFSGWGKLRSGKSFEELSDEEKAKVGRMNELCEQFISADKYVFVTPMWNFSFPPVLKAYIDAVAVAGKTFKYTEQGPVGLLTDKKALHIQARGGFYSEGPAAEMEMGHRYLSVIMQFFGVPSFEGLFVEGHAAVPEKAEEIKANAIARAKDLAHTF.

Residues S17 to S19 and M102 to F105 contribute to the FMN site.

Belongs to the azoreductase type 1 family. As to quaternary structure, homodimer. Requires FMN as cofactor.

It carries out the reaction 2 a quinone + NADH + H(+) = 2 a 1,4-benzosemiquinone + NAD(+). The enzyme catalyses N,N-dimethyl-1,4-phenylenediamine + anthranilate + 2 NAD(+) = 2-(4-dimethylaminophenyl)diazenylbenzoate + 2 NADH + 2 H(+). Functionally, quinone reductase that provides resistance to thiol-specific stress caused by electrophilic quinones. Also exhibits azoreductase activity. Catalyzes the reductive cleavage of the azo bond in aromatic azo compounds to the corresponding amines. In Geobacillus kaustophilus (strain HTA426), this protein is FMN-dependent NADH:quinone oxidoreductase.